The primary structure comprises 90 residues: Small ribosomal subunit protein bS16 (90 aa).

Belongs to the bacterial ribosomal protein bS16 family.

This chain is Small ribosomal subunit protein bS16, found in Geobacillus kaustophilus (strain HTA426).